A 183-amino-acid polypeptide reads, in one-letter code: Ribulose bisphosphate carboxylase small subunit, chloroplastic 3 (183 aa).

Residues 1–43 (MATTMLNRSVIVNKEVAKTPNFPRATKNNKGFASNAAVQKCRD) constitute a chloroplast transit peptide.

It belongs to the RuBisCO small chain family. As to quaternary structure, heterohexadecamer of 8 large and 8 small subunits.

Its subcellular location is the plastid. It is found in the chloroplast. In terms of biological role, ruBisCO catalyzes two reactions: the carboxylation of D-ribulose 1,5-bisphosphate, the primary event in carbon dioxide fixation, as well as the oxidative fragmentation of the pentose substrate. Both reactions occur simultaneously and in competition at the same active site. Although the small subunit is not catalytic it is essential for maximal activity. The protein is Ribulose bisphosphate carboxylase small subunit, chloroplastic 3 of Acetabularia peniculus (Green alga).